Here is a 218-residue protein sequence, read N- to C-terminus: Outer-membrane lipoprotein LolB (218 aa).

The first 24 residues, 1–24, serve as a signal peptide directing secretion; sequence MNNLSYLTKIPLIWVLLSVTLLSA. Cysteine 25 is lipidated: N-palmitoyl cysteine. The S-diacylglycerol cysteine moiety is linked to residue cysteine 25.

This sequence belongs to the LolB family. Monomer.

It is found in the cell outer membrane. Plays a critical role in the incorporation of lipoproteins in the outer membrane after they are released by the LolA protein. In Shewanella sediminis (strain HAW-EB3), this protein is Outer-membrane lipoprotein LolB.